The primary structure comprises 156 residues: Small ribosomal subunit protein uS7 (156 aa).

This sequence belongs to the universal ribosomal protein uS7 family. As to quaternary structure, part of the 30S ribosomal subunit. Contacts proteins S9 and S11.

Its function is as follows. One of the primary rRNA binding proteins, it binds directly to 16S rRNA where it nucleates assembly of the head domain of the 30S subunit. Is located at the subunit interface close to the decoding center, probably blocks exit of the E-site tRNA. The sequence is that of Small ribosomal subunit protein uS7 from Shouchella clausii (strain KSM-K16) (Alkalihalobacillus clausii).